We begin with the raw amino-acid sequence, 481 residues long: DNA primase DnaG (481 aa).

Residues 169 to 243 (DAILVVEGRA…DVDYVARAPD (75 aa)) enclose the Toprim domain. Mg(2+) contacts are provided by glutamate 175, aspartate 217, and aspartate 219. The segment at 275–393 (RRRNKLAAQA…ARKEREPSEF (119 aa)) is disordered. A compositionally biased stretch (low complexity) spans 281–309 (AAQAAEKQAQAEAAQKAEAPAAAAPVQPQ). Basic and acidic residues predominate over residues 312 to 393 (YQQKEYPQRE…ARKEREPSEF (82 aa)).

The protein belongs to the archaeal DnaG primase family. Forms a ternary complex with MCM helicase and DNA. Component of the archaeal exosome complex. The cofactor is Mg(2+).

The enzyme catalyses ssDNA + n NTP = ssDNA/pppN(pN)n-1 hybrid + (n-1) diphosphate.. Its function is as follows. RNA polymerase that catalyzes the synthesis of short RNA molecules used as primers for DNA polymerase during DNA replication. Also part of the exosome, which is a complex involved in RNA degradation. Acts as a poly(A)-binding protein that enhances the interaction between heteromeric, adenine-rich transcripts and the exosome. The sequence is that of DNA primase DnaG from Methanocella arvoryzae (strain DSM 22066 / NBRC 105507 / MRE50).